The following is a 101-amino-acid chain: Salivary thrombin inhibitor anophelin (101 aa).

The first 21 residues, 1–21, serve as a signal peptide directing secretion; sequence MASKVIVIALLCIALAAFVQG. Residues 26-101 are disordered; the sequence is THGEEPEYDE…SDSSSGSTEN (76 aa). Positions 31 to 40 are enriched in acidic residues; that stretch reads PEYDEDDGAD. The segment at 75–78 is blocks active site cleft of host thrombin in a reverse direction compared to substrates; that stretch reads DPGR. Residues 75 to 87 show a composition bias toward basic and acidic residues; that stretch reads DPGRRPEFLKQHN. Residues 88-101 are compositionally biased toward polar residues; that stretch reads NENQSDSSSGSTEN. Asn-90 carries an N-linked (GlcNAc...) asparagine glycan.

The protein belongs to the anophelin family. Interacts with human F2 (thrombin); the interaction results in thrombin inhibition.

The protein resides in the secreted. Functionally, salivary protein with anticoagulant activity that inhibits host thrombin (F2). The chain is Salivary thrombin inhibitor anophelin from Anopheles stephensi (Indo-Pakistan malaria mosquito).